The following is a 145-amino-acid chain: D-aminoacyl-tRNA deacylase (145 aa).

A Gly-cisPro motif, important for rejection of L-amino acids motif is present at residues 137–138 (GP).

This sequence belongs to the DTD family. Homodimer.

Its subcellular location is the cytoplasm. The enzyme catalyses glycyl-tRNA(Ala) + H2O = tRNA(Ala) + glycine + H(+). The catalysed reaction is a D-aminoacyl-tRNA + H2O = a tRNA + a D-alpha-amino acid + H(+). In terms of biological role, an aminoacyl-tRNA editing enzyme that deacylates mischarged D-aminoacyl-tRNAs. Also deacylates mischarged glycyl-tRNA(Ala), protecting cells against glycine mischarging by AlaRS. Acts via tRNA-based rather than protein-based catalysis; rejects L-amino acids rather than detecting D-amino acids in the active site. By recycling D-aminoacyl-tRNA to D-amino acids and free tRNA molecules, this enzyme counteracts the toxicity associated with the formation of D-aminoacyl-tRNA entities in vivo and helps enforce protein L-homochirality. In Pseudomonas savastanoi pv. phaseolicola (strain 1448A / Race 6) (Pseudomonas syringae pv. phaseolicola (strain 1448A / Race 6)), this protein is D-aminoacyl-tRNA deacylase.